An 865-amino-acid chain; its full sequence is Armadillo repeat-containing protein 2 (865 aa).

Disordered stretches follow at residues 39–75 (TVRT…FSVH) and 214–243 (SVPF…DQSR). The span at 60-75 (SSRTPENRPPSSFSVH) shows a compositional bias: polar residues. ARM repeat units follow at residues 261 to 300 (IEVD…HALE), 303 to 343 (NMLG…ALKV), 362 to 402 (EKND…TIKF), 407 to 448 (PEFL…HLLV), 461 to 502 (PLAR…KLTS), 505 to 546 (DCCV…NLTA), 550 to 587 (QARE…GEGD), 589 to 614 (RPEA…NLAI), 617 to 660 (GVGP…NLSY), 662 to 703 (KVKN…NLSQ), 705 to 744 (HDIC…NLTV), and 746 to 788 (RDKR…NFSE).

Functionally, required for sperm flagellum axoneme organization and function. Involved in axonemal central pair complex assembly and/or stability. This chain is Armadillo repeat-containing protein 2, found in Bos taurus (Bovine).